The chain runs to 290 residues: Small ribosomal subunit biogenesis GTPase RsgA (290 aa).

In terms of domain architecture, CP-type G spans R62–L219. Residues N111–D114 and G161–S169 contribute to the GTP site. Positions 243, 248, 250, and 256 each coordinate Zn(2+).

This sequence belongs to the TRAFAC class YlqF/YawG GTPase family. RsgA subfamily. In terms of assembly, monomer. Associates with 30S ribosomal subunit, binds 16S rRNA. It depends on Zn(2+) as a cofactor.

Its subcellular location is the cytoplasm. Functionally, one of several proteins that assist in the late maturation steps of the functional core of the 30S ribosomal subunit. Helps release RbfA from mature subunits. May play a role in the assembly of ribosomal proteins into the subunit. Circularly permuted GTPase that catalyzes slow GTP hydrolysis, GTPase activity is stimulated by the 30S ribosomal subunit. The chain is Small ribosomal subunit biogenesis GTPase RsgA from Moorella thermoacetica (strain ATCC 39073 / JCM 9320).